The primary structure comprises 274 residues: Large ribosomal subunit protein uL2 (274 aa).

Residues 223-274 (VAMNPVDHPHGGGEGKTSGGRHPVSPWGVPTKGYKTRSNKRTDKFIVRRRAK) are disordered.

It belongs to the universal ribosomal protein uL2 family. Part of the 50S ribosomal subunit. Forms a bridge to the 30S subunit in the 70S ribosome.

One of the primary rRNA binding proteins. Required for association of the 30S and 50S subunits to form the 70S ribosome, for tRNA binding and peptide bond formation. It has been suggested to have peptidyltransferase activity; this is somewhat controversial. Makes several contacts with the 16S rRNA in the 70S ribosome. The chain is Large ribosomal subunit protein uL2 from Colwellia psychrerythraea (strain 34H / ATCC BAA-681) (Vibrio psychroerythus).